A 275-amino-acid polypeptide reads, in one-letter code: Dermonecrotic toxin LruSicTox-alphaIV1 (275 aa).

His-5 is a catalytic residue. Residues Glu-25 and Asp-27 each coordinate Mg(2+). The Nucleophile role is filled by His-41. 2 disulfide bridges follow: Cys-45–Cys-51 and Cys-47–Cys-192. Residue Asp-85 participates in Mg(2+) binding.

This sequence belongs to the arthropod phospholipase D family. Class II subfamily. Mg(2+) serves as cofactor. In terms of tissue distribution, expressed by the venom gland.

The protein resides in the secreted. The catalysed reaction is an N-(acyl)-sphingosylphosphocholine = an N-(acyl)-sphingosyl-1,3-cyclic phosphate + choline. It carries out the reaction an N-(acyl)-sphingosylphosphoethanolamine = an N-(acyl)-sphingosyl-1,3-cyclic phosphate + ethanolamine. It catalyses the reaction a 1-acyl-sn-glycero-3-phosphocholine = a 1-acyl-sn-glycero-2,3-cyclic phosphate + choline. The enzyme catalyses a 1-acyl-sn-glycero-3-phosphoethanolamine = a 1-acyl-sn-glycero-2,3-cyclic phosphate + ethanolamine. Functionally, dermonecrotic toxins cleave the phosphodiester linkage between the phosphate and headgroup of certain phospholipids (sphingolipid and lysolipid substrates), forming an alcohol (often choline) and a cyclic phosphate. This toxin acts on sphingomyelin (SM). It may also act on ceramide phosphoethanolamine (CPE), lysophosphatidylcholine (LPC) and lysophosphatidylethanolamine (LPE), but not on lysophosphatidylserine (LPS), and lysophosphatidylglycerol (LPG). It acts by transphosphatidylation, releasing exclusively cyclic phosphate products as second products. Induces dermonecrosis, hemolysis, increased vascular permeability, edema, inflammatory response, and platelet aggregation. The protein is Dermonecrotic toxin LruSicTox-alphaIV1 of Loxosceles rufescens (Mediterranean recluse spider).